A 122-amino-acid chain; its full sequence is Large ribosomal subunit protein uL14 (122 aa).

Belongs to the universal ribosomal protein uL14 family. In terms of assembly, part of the 50S ribosomal subunit. Forms a cluster with proteins L3 and L19. In the 70S ribosome, L14 and L19 interact and together make contacts with the 16S rRNA in bridges B5 and B8.

Functionally, binds to 23S rRNA. Forms part of two intersubunit bridges in the 70S ribosome. The polypeptide is Large ribosomal subunit protein uL14 (Mycoplasma pneumoniae (strain ATCC 29342 / M129 / Subtype 1) (Mycoplasmoides pneumoniae)).